A 179-amino-acid polypeptide reads, in one-letter code: MMKDIIPASSWASEESTDLQNGSFPLSVAPRSEFPRRRALEDWLLSVFLADQAESEGQLVLERVRDTPPPVTSPRGDGICVSRGKAPSSPGGSTHAWLYLTRHFPWSPFPHGGWTDTSEPCVLETLGGSSLAALRGNSLWVQSSGACAFCVYESLIEQSLPNERFEELLLGPSPGEVMK.

Disordered regions lie at residues 1–20 (MMKD…TDLQ) and 65–86 (RDTP…RGKA). Residues 10–20 (SWASEESTDLQ) are compositionally biased toward polar residues.

The protein is B-cell acute lymphoblastic leukemia-expressed protein (BLACE) of Homo sapiens (Human).